A 233-amino-acid chain; its full sequence is MTSLTPSALSSSHALVVFSGGQDSTTCLGWAIKHFKSVEAITFDYGQRHRIEIEQSRLIAQKLGIKQFILEFDLFSKLGDSALLETSSDLKASPHRTKPHLPASFVPNRNALFFTLAHAYAQREGLTHIITGISEADYSGYPDCREEFITHLERTLNLGSDSSILFAYPLLHRNKAQTFALAKECGVLDLVLEESHTCYNGDRSHRYEWGYGCKECPACGLREKGWREYQASL.

18-28 (FSGGQDSTTCL) lines the ATP pocket. Positions 198, 213, 216, and 219 each coordinate Zn(2+).

The protein belongs to the QueC family. Requires Zn(2+) as cofactor.

The catalysed reaction is 7-carboxy-7-deazaguanine + NH4(+) + ATP = 7-cyano-7-deazaguanine + ADP + phosphate + H2O + H(+). It functions in the pathway purine metabolism; 7-cyano-7-deazaguanine biosynthesis. In terms of biological role, catalyzes the ATP-dependent conversion of 7-carboxy-7-deazaguanine (CDG) to 7-cyano-7-deazaguanine (preQ(0)). This Wolinella succinogenes (strain ATCC 29543 / DSM 1740 / CCUG 13145 / JCM 31913 / LMG 7466 / NCTC 11488 / FDC 602W) (Vibrio succinogenes) protein is 7-cyano-7-deazaguanine synthase.